The chain runs to 429 residues: Gamma-glutamyl phosphate reductase (429 aa).

This sequence belongs to the gamma-glutamyl phosphate reductase family.

It localises to the cytoplasm. It carries out the reaction L-glutamate 5-semialdehyde + phosphate + NADP(+) = L-glutamyl 5-phosphate + NADPH + H(+). It participates in amino-acid biosynthesis; L-proline biosynthesis; L-glutamate 5-semialdehyde from L-glutamate: step 2/2. Catalyzes the NADPH-dependent reduction of L-glutamate 5-phosphate into L-glutamate 5-semialdehyde and phosphate. The product spontaneously undergoes cyclization to form 1-pyrroline-5-carboxylate. In Sphingopyxis alaskensis (strain DSM 13593 / LMG 18877 / RB2256) (Sphingomonas alaskensis), this protein is Gamma-glutamyl phosphate reductase.